Here is an 846-residue protein sequence, read N- to C-terminus: Protein kintoun (846 aa).

4 disordered regions span residues 1-21 (MSTA…ERAD), 377-412 (DSGV…PPDP), 581-657 (HTSI…DSTI), and 743-846 (HDSS…DDEI). Ser378 carries the post-translational modification Phosphoserine. Residues 399–408 (PETPELETAA) show a composition bias toward low complexity. 2 stretches are compositionally biased toward basic residues: residues 596-612 (LHKK…KKQR) and 750-766 (QRKK…RAQQ). Residue Ser770 is modified to Phosphoserine. Residues 821–832 (TRQDHADADAKN) are compositionally biased toward basic and acidic residues.

The protein belongs to the PIH1 family. Kintoun subfamily. As to quaternary structure, interacts with Pp1alpha-96A, Pp1-87B, Pp1-13C and flw.

The protein localises to the cytoplasm. Required for cytoplasmic pre-assembly of axonemal dyneins, thereby playing a central role in motility in cilia and flagella. Involved in pre-assembly of dynein arm complexes in the cytoplasm before intraflagellar transport loads them for the ciliary compartment. The protein is Protein kintoun of Drosophila pseudoobscura pseudoobscura (Fruit fly).